A 75-amino-acid chain; its full sequence is Small ribosomal subunit protein bS18 (75 aa).

It belongs to the bacterial ribosomal protein bS18 family. Part of the 30S ribosomal subunit. Forms a tight heterodimer with protein bS6.

In terms of biological role, binds as a heterodimer with protein bS6 to the central domain of the 16S rRNA, where it helps stabilize the platform of the 30S subunit. This chain is Small ribosomal subunit protein bS18, found in Cereibacter sphaeroides (strain KD131 / KCTC 12085) (Rhodobacter sphaeroides).